Here is a 327-residue protein sequence, read N- to C-terminus: Putative ABC transporter ATP-binding protein MM_0887 (327 aa).

The interval methionine 1–threonine 44 is disordered. Residues threonine 28–threonine 44 show a composition bias toward basic and acidic residues. An ABC transporter domain is found at isoleucine 47–arginine 282. Glycine 81–serine 88 contributes to the ATP binding site.

This sequence belongs to the ABC transporter superfamily.

It is found in the cell membrane. Functionally, probably part of an ABC transporter complex. Responsible for energy coupling to the transport system. The polypeptide is Putative ABC transporter ATP-binding protein MM_0887 (Methanosarcina mazei (strain ATCC BAA-159 / DSM 3647 / Goe1 / Go1 / JCM 11833 / OCM 88) (Methanosarcina frisia)).